The chain runs to 375 residues: Trichodiene synthase (375 aa).

Belongs to the trichodiene synthase family.

The enzyme catalyses (2E,6E)-farnesyl diphosphate = trichodiene + diphosphate. The protein operates within sesquiterpene biosynthesis; trichothecene biosynthesis. Its function is as follows. TS is a member of the terpene cyclase group of enzymes. It catalyzes the isomerization and cyclization of farnesyl pyro-phosphate to form trichodiene, the first cyclic intermediate in the biosynthetic pathway for trichothecenes. It serves to branch trichothecene biosynthesis from the isoprenoid pathway. The sequence is that of Trichodiene synthase (TRI5) from Fusarium austroamericanum.